The following is a 458-amino-acid chain: DNA repair protein RadA (458 aa).

A C4-type zinc finger spans residues 10–27; that stretch reads CQSCGYESPKWMGKCPGC. 98 to 105 contacts ATP; the sequence is GDPGIGKS. The RadA KNRFG motif motif lies at 255 to 259; the sequence is KNRFG. The lon-protease-like stretch occupies residues 354 to 458; it reads DAYLKVAGGV…AEALRTSLGG (105 aa).

This sequence belongs to the RecA family. RadA subfamily. As to quaternary structure, interacts with DisA.

In terms of biological role, DNA-dependent ATPase involved in processing of recombination intermediates, plays a role in repairing DNA breaks. Stimulates the branch migration of RecA-mediated strand transfer reactions, allowing the 3' invading strand to extend heteroduplex DNA faster. Binds ssDNA in the presence of ADP but not other nucleotides, has ATPase activity that is stimulated by ssDNA and various branched DNA structures, but inhibited by SSB. Does not have RecA's homology-searching function. Its function is as follows. Plays a role in DNA repair. Might stabilize or process Holliday junction intermediates. May work with DisA following methyl methanesulfonate (MMS) but not H(2)O(2) damage; DisA is a DNA integrity scanning protein with c-di-AMP synthase activity. This Bacillus subtilis (strain 168) protein is DNA repair protein RadA.